The following is a 99-amino-acid chain: Cell division protein FtsB (99 aa).

Residues 1 to 3 are Cytoplasmic-facing; it reads MKF. A helical transmembrane segment spans residues 4-21; the sequence is FVITLIVLLGLLQYRLWS. Topologically, residues 22 to 99 are periplasmic; it reads GDNSLPEYFV…GDRAVSSPSQ (78 aa). Residues 31 to 73 are a coiled coil; it reads VLQKQIAAQQDGNAKLNERNQVLKEEIIDLKSGTEAIEERARN.

It belongs to the FtsB family. In terms of assembly, part of a complex composed of FtsB, FtsL and FtsQ.

The protein localises to the cell inner membrane. Functionally, essential cell division protein. May link together the upstream cell division proteins, which are predominantly cytoplasmic, with the downstream cell division proteins, which are predominantly periplasmic. This is Cell division protein FtsB from Shewanella oneidensis (strain ATCC 700550 / JCM 31522 / CIP 106686 / LMG 19005 / NCIMB 14063 / MR-1).